A 253-amino-acid polypeptide reads, in one-letter code: Vitamin B12 import ATP-binding protein BtuD (253 aa).

Residues Leu4–Asp236 enclose the ABC transporter domain. Gly32–Ser39 lines the ATP pocket.

It belongs to the ABC transporter superfamily. Vitamin B12 importer (TC 3.A.1.13.1) family. As to quaternary structure, the complex is composed of two ATP-binding proteins (BtuD), two transmembrane proteins (BtuC) and a solute-binding protein (BtuF).

It is found in the cell inner membrane. The enzyme catalyses an R-cob(III)alamin(out) + ATP + H2O = an R-cob(III)alamin(in) + ADP + phosphate + H(+). Its function is as follows. Part of the ABC transporter complex BtuCDF involved in vitamin B12 import. Responsible for energy coupling to the transport system. This is Vitamin B12 import ATP-binding protein BtuD from Yersinia pestis.